The sequence spans 241 residues: Triosephosphate isomerase (241 aa).

Residue 9–11 (NWK) coordinates substrate. Histidine 96 (electrophile) is an active-site residue. The Proton acceptor role is filled by glutamate 165. Residues glycine 171, serine 204, and 225–226 (GG) contribute to the substrate site.

Belongs to the triosephosphate isomerase family. Homodimer.

It is found in the cytoplasm. The catalysed reaction is D-glyceraldehyde 3-phosphate = dihydroxyacetone phosphate. The protein operates within carbohydrate biosynthesis; gluconeogenesis. It functions in the pathway carbohydrate degradation; glycolysis; D-glyceraldehyde 3-phosphate from glycerone phosphate: step 1/1. Its function is as follows. Involved in the gluconeogenesis. Catalyzes stereospecifically the conversion of dihydroxyacetone phosphate (DHAP) to D-glyceraldehyde-3-phosphate (G3P). This chain is Triosephosphate isomerase, found in Gloeothece citriformis (strain PCC 7424) (Cyanothece sp. (strain PCC 7424)).